We begin with the raw amino-acid sequence, 342 residues long: Ribosomal RNA small subunit methyltransferase C (342 aa).

The protein belongs to the methyltransferase superfamily. RsmC family. In terms of assembly, monomer.

It localises to the cytoplasm. The enzyme catalyses guanosine(1207) in 16S rRNA + S-adenosyl-L-methionine = N(2)-methylguanosine(1207) in 16S rRNA + S-adenosyl-L-homocysteine + H(+). In terms of biological role, specifically methylates the guanine in position 1207 of 16S rRNA in the 30S particle. In Shewanella sp. (strain MR-7), this protein is Ribosomal RNA small subunit methyltransferase C.